Consider the following 218-residue polypeptide: Imidazole glycerol phosphate synthase subunit HisH (218 aa).

In terms of domain architecture, Glutamine amidotransferase type-1 spans 12–218 (SIVVVDYGLG…RNFVDYCADQ (207 aa)). The active-site Nucleophile is the Cys88. Active-site residues include His196 and Glu198.

Heterodimer of HisH and HisF.

Its subcellular location is the cytoplasm. It catalyses the reaction 5-[(5-phospho-1-deoxy-D-ribulos-1-ylimino)methylamino]-1-(5-phospho-beta-D-ribosyl)imidazole-4-carboxamide + L-glutamine = D-erythro-1-(imidazol-4-yl)glycerol 3-phosphate + 5-amino-1-(5-phospho-beta-D-ribosyl)imidazole-4-carboxamide + L-glutamate + H(+). The enzyme catalyses L-glutamine + H2O = L-glutamate + NH4(+). It functions in the pathway amino-acid biosynthesis; L-histidine biosynthesis; L-histidine from 5-phospho-alpha-D-ribose 1-diphosphate: step 5/9. Functionally, IGPS catalyzes the conversion of PRFAR and glutamine to IGP, AICAR and glutamate. The HisH subunit catalyzes the hydrolysis of glutamine to glutamate and ammonia as part of the synthesis of IGP and AICAR. The resulting ammonia molecule is channeled to the active site of HisF. The chain is Imidazole glycerol phosphate synthase subunit HisH from Halobacterium salinarum (strain ATCC 700922 / JCM 11081 / NRC-1) (Halobacterium halobium).